A 363-amino-acid chain; its full sequence is 3-dehydroquinate synthase (363 aa).

Residues 75–80 (DAEEGK), 109–113 (GAVTD), 133–134 (TS), lysine 146, lysine 155, and 173–176 (TLDT) contribute to the NAD(+) site. Zn(2+) contacts are provided by glutamate 188, histidine 251, and histidine 267.

It belongs to the sugar phosphate cyclases superfamily. Dehydroquinate synthase family. The cofactor is Co(2+). It depends on Zn(2+) as a cofactor. NAD(+) is required as a cofactor.

The protein resides in the cytoplasm. It carries out the reaction 7-phospho-2-dehydro-3-deoxy-D-arabino-heptonate = 3-dehydroquinate + phosphate. It participates in metabolic intermediate biosynthesis; chorismate biosynthesis; chorismate from D-erythrose 4-phosphate and phosphoenolpyruvate: step 2/7. In terms of biological role, catalyzes the conversion of 3-deoxy-D-arabino-heptulosonate 7-phosphate (DAHP) to dehydroquinate (DHQ). The protein is 3-dehydroquinate synthase of Pseudarthrobacter chlorophenolicus (strain ATCC 700700 / DSM 12829 / CIP 107037 / JCM 12360 / KCTC 9906 / NCIMB 13794 / A6) (Arthrobacter chlorophenolicus).